A 299-amino-acid chain; its full sequence is Xyloglucan endotransglucosylase protein 6 (299 aa).

An N-terminal signal peptide occupies residues 1-25 (MASSLTLPMAMAFTLLALSFASAMG). The region spanning 26 to 219 (GSMNSSRFDE…WSHAPFVASY (194 aa)) is the GH16 domain. E105 acts as the Nucleophile in catalysis. Catalysis depends on E109, which acts as the Proton donor. E109 is a binding site for xyloglucan. A glycan (N-linked (GlcNAc...) asparagine) is linked at N113. Residues 122–124 (QTN), 132–134 (NRE), 198–199 (DW), and G203 contribute to the xyloglucan site. 2 cysteine pairs are disulfide-bonded: C227–C242 and C281–C294. Xyloglucan is bound at residue R286.

It belongs to the glycosyl hydrolase 16 family. XTH group 1 subfamily. In terms of processing, contains at least one intrachain disulfide bond essential for its enzymatic activity. Highest expression in ripe leaves after full expansion. Also expressed in fruits, and at a lower level in flowers and stems (picked at anthesis).

It localises to the secreted. The protein localises to the cell wall. It is found in the extracellular space. Its subcellular location is the apoplast. The catalysed reaction is breaks a beta-(1-&gt;4) bond in the backbone of a xyloglucan and transfers the xyloglucanyl segment on to O-4 of the non-reducing terminal glucose residue of an acceptor, which can be a xyloglucan or an oligosaccharide of xyloglucan.. In terms of biological role, catalyzes xyloglucan endotransglycosylation (XET). Cleaves and religates xyloglucan polymers. Does not catalyze xyloglucan endohydrolysis (XEH). Probably involved in cell wall restructuring during postharvest fruit softening. The chain is Xyloglucan endotransglucosylase protein 6 from Diospyros kaki (Kaki persimmon).